We begin with the raw amino-acid sequence, 395 residues long: Ribosomal RNA large subunit methyltransferase I (395 aa).

The PUA domain occupies Ser-2–Phe-79.

It belongs to the methyltransferase superfamily. RlmI family.

The protein resides in the cytoplasm. It carries out the reaction cytidine(1962) in 23S rRNA + S-adenosyl-L-methionine = 5-methylcytidine(1962) in 23S rRNA + S-adenosyl-L-homocysteine + H(+). Its function is as follows. Specifically methylates the cytosine at position 1962 (m5C1962) of 23S rRNA. The polypeptide is Ribosomal RNA large subunit methyltransferase I (Pseudoalteromonas atlantica (strain T6c / ATCC BAA-1087)).